Reading from the N-terminus, the 928-residue chain is Isoleucine--tRNA ligase (928 aa).

Residues 57-67 (PFANGNIHMGH) carry the 'HIGH' region motif. Glutamate 552 contributes to the L-isoleucyl-5'-AMP binding site. A 'KMSKS' region motif is present at residues 593–597 (KMSKS). Residue lysine 596 participates in ATP binding. Residues cysteine 887, cysteine 890, cysteine 907, and cysteine 910 each contribute to the Zn(2+) site.

This sequence belongs to the class-I aminoacyl-tRNA synthetase family. IleS type 1 subfamily. Monomer. It depends on Zn(2+) as a cofactor.

The protein localises to the cytoplasm. It carries out the reaction tRNA(Ile) + L-isoleucine + ATP = L-isoleucyl-tRNA(Ile) + AMP + diphosphate. Functionally, catalyzes the attachment of isoleucine to tRNA(Ile). As IleRS can inadvertently accommodate and process structurally similar amino acids such as valine, to avoid such errors it has two additional distinct tRNA(Ile)-dependent editing activities. One activity is designated as 'pretransfer' editing and involves the hydrolysis of activated Val-AMP. The other activity is designated 'posttransfer' editing and involves deacylation of mischarged Val-tRNA(Ile). The polypeptide is Isoleucine--tRNA ligase (Lacticaseibacillus paracasei (strain ATCC 334 / BCRC 17002 / CCUG 31169 / CIP 107868 / KCTC 3260 / NRRL B-441) (Lactobacillus paracasei)).